The primary structure comprises 227 residues: MAPYHIRKYQESDRKSVVGLLSGGMAEHAPATFRRLLKLPRTLILLLGGALALLLVSGSWILALVFSLSLLPALWFLAKKPWTRYVDIALRTDMSDITKSYLSECGSCFWVAESEEKVVGTVGALPVDDPTLREKRLQLFHLSVDNEHRGQGIAKALVRTVLQFARDQGYSEVVLDTSNIQLSAMGLYQSLGFKKTGQSFFHVWARLVDLHTVHFIYHLPSAQAGRL.

Topologically, residues 1-42 (MAPYHIRKYQESDRKSVVGLLSGGMAEHAPATFRRLLKLPRT) are cytoplasmic. The helical; Signal-anchor for type II membrane protein transmembrane segment at 43 to 63 (LILLLGGALALLLVSGSWILA) threads the bilayer. The N-acetyltransferase domain maps to 61–214 (ILALVFSLSL…ARLVDLHTVH (154 aa)). At 64–227 (LVFSLSLLPA…HLPSAQAGRL (164 aa)) the chain is on the lumenal side. Lysine 99 is subject to N6-acetyllysine.

Belongs to the NAT8 family. Post-translationally, acetylation on Lys-99 modulates enzymatic activity.

Its subcellular location is the endoplasmic reticulum-Golgi intermediate compartment membrane. The protein localises to the endoplasmic reticulum membrane. It carries out the reaction L-lysyl-[protein] + acetyl-CoA = N(6)-acetyl-L-lysyl-[protein] + CoA + H(+). Its activity is regulated as follows. Allosterically regulated by acetylation at residue Lys-99. Endoplasmic reticulum (ER)-membrane-bound lysine N-acetyltransferase catalyzing the N6-acetylation of lysine residues in the lumen of the ER in various proteins, including PROM1 and BACE1, using acetyl-CoA as acetyl donor. Thereby, may regulate apoptosis through the acetylation and the regulation of the expression of PROM1. Acetylates and stabilizes BACE1 immature protein, leading to increased steady-state levels in neurons. By acting on BACE1 expression, may regulate amyloid beta-peptide formation. N(6)-lysine acetylation in ER maintains protein homeostasis and regulates reticulophagy. The chain is N-acetyltransferase 8B from Homo sapiens (Human).